We begin with the raw amino-acid sequence, 2890 residues long: Bifunctional DNA-directed RNA polymerase subunit beta-beta' (2890 aa).

The tract at residues 1–1377 (MSKKIPLKNR…DINIFGDDVD (1377 aa)) is DNA-directed RNA polymerase subunit beta. The DNA-directed RNA polymerase subunit beta' stretch occupies residues 1384 to 2890 (PIVIKEDDRP…LRTLEDGPKF (1507 aa)). Residues Cys-1449, Cys-1451, Cys-1465, and Cys-1468 each contribute to the Zn(2+) site. Residues Asp-1849, Asp-1851, and Asp-1853 each contribute to the Mg(2+) site. Zn(2+)-binding residues include Cys-2179, Cys-2253, Cys-2260, and Cys-2263.

In the N-terminal section; belongs to the RNA polymerase beta chain family. The protein in the C-terminal section; belongs to the RNA polymerase beta' chain family. The RNAP catalytic core consists of 2 alpha, 1 beta/beta' and 1 omega subunit. When a sigma factor is associated with the core the holoenzyme is formed, which can initiate transcription. Requires Mg(2+) as cofactor. It depends on Zn(2+) as a cofactor.

It carries out the reaction RNA(n) + a ribonucleoside 5'-triphosphate = RNA(n+1) + diphosphate. Its function is as follows. DNA-dependent RNA polymerase catalyzes the transcription of DNA into RNA using the four ribonucleoside triphosphates as substrates. The protein is Bifunctional DNA-directed RNA polymerase subunit beta-beta' (rpoBC) of Helicobacter pylori (strain HPAG1).